A 130-amino-acid polypeptide reads, in one-letter code: Small ribosomal subunit protein uS8 (130 aa).

Belongs to the universal ribosomal protein uS8 family. As to quaternary structure, part of the 30S ribosomal subunit. Contacts proteins S5 and S12.

In terms of biological role, one of the primary rRNA binding proteins, it binds directly to 16S rRNA central domain where it helps coordinate assembly of the platform of the 30S subunit. This is Small ribosomal subunit protein uS8 from Psychromonas ingrahamii (strain DSM 17664 / CCUG 51855 / 37).